We begin with the raw amino-acid sequence, 252 residues long: MTTKADKSDDGKVRGRYLLKLSGEAFSGGGGLGVDPDVVHAIAREIAAVVRDGSEIAVVIGGGNFFRGAELQQRGMDRARSDYMGMLGTVMNCLALQDFLEKEGIDSRVQTAITMGQVAEPYIPLRAVRHLEKGRVVIFGAGMGMPYFSTDTTAAQRALEIDAEALLMGKNGVDGVYDSDPKTNPEAVKFDSLSYGEVITRDLKVADMTAITLCRDNKLPILVFELLAEGNIARAVKGEKIGTLVGDQGSRD.

20-23 (KLSG) lines the ATP pocket. The involved in allosteric activation by GTP stretch occupies residues 28–33 (GGGGLG). G62 lines the UMP pocket. ATP contacts are provided by G63 and R67. Residues D82 and 143-150 (MGMPYFST) each bind UMP. Residues N171, Y177, and D180 each contribute to the ATP site.

It belongs to the UMP kinase family. In terms of assembly, homohexamer.

The protein resides in the cytoplasm. The enzyme catalyses UMP + ATP = UDP + ADP. It functions in the pathway pyrimidine metabolism; CTP biosynthesis via de novo pathway; UDP from UMP (UMPK route): step 1/1. Allosterically activated by GTP. Inhibited by UTP. Its function is as follows. Catalyzes the reversible phosphorylation of UMP to UDP. The sequence is that of Uridylate kinase from Streptomyces avermitilis (strain ATCC 31267 / DSM 46492 / JCM 5070 / NBRC 14893 / NCIMB 12804 / NRRL 8165 / MA-4680).